Consider the following 518-residue polypeptide: GMP synthase [glutamine-hydrolyzing] (518 aa).

A Glutamine amidotransferase type-1 domain is found at 13–203; it reads KIIVLDFGSQ…ALNICGCKGD (191 aa). The active-site Nucleophile is the C90. Active-site residues include H177 and E179. Residues 204–393 enclose the GMPS ATP-PPase domain; that stretch reads WTMENFSEVE…LGMPDAIVWR (190 aa). 231-237 is a binding site for ATP; it reads SGGVDSS.

As to quaternary structure, homodimer.

The enzyme catalyses XMP + L-glutamine + ATP + H2O = GMP + L-glutamate + AMP + diphosphate + 2 H(+). It participates in purine metabolism; GMP biosynthesis; GMP from XMP (L-Gln route): step 1/1. Catalyzes the synthesis of GMP from XMP. This chain is GMP synthase [glutamine-hydrolyzing], found in Listeria innocua serovar 6a (strain ATCC BAA-680 / CLIP 11262).